Consider the following 247-residue polypeptide: ATP synthase subunit a, chloroplastic (247 aa).

A run of 5 helical transmembrane segments spans residues 38–58 (QVLI…IIAV), 95–115 (VPFI…GALL), 134–154 (INTT…AGLT), 199–219 (LVVV…VMFL), and 220–240 (GLFT…AYIG).

The protein belongs to the ATPase A chain family. F-type ATPases have 2 components, CF(1) - the catalytic core - and CF(0) - the membrane proton channel. CF(1) has five subunits: alpha(3), beta(3), gamma(1), delta(1), epsilon(1). CF(0) has four main subunits: a, b, b' and c.

Its subcellular location is the plastid. The protein localises to the chloroplast thylakoid membrane. Functionally, key component of the proton channel; it plays a direct role in the translocation of protons across the membrane. The polypeptide is ATP synthase subunit a, chloroplastic (Ranunculus macranthus (Large buttercup)).